Reading from the N-terminus, the 212-residue chain is Large ribosomal subunit protein uL3 (212 aa).

At glutamine 153 the chain carries N5-methylglutamine.

This sequence belongs to the universal ribosomal protein uL3 family. Part of the 50S ribosomal subunit. Forms a cluster with proteins L14 and L19. Methylated by PrmB.

In terms of biological role, one of the primary rRNA binding proteins, it binds directly near the 3'-end of the 23S rRNA, where it nucleates assembly of the 50S subunit. This chain is Large ribosomal subunit protein uL3, found in Shewanella halifaxensis (strain HAW-EB4).